Consider the following 290-residue polypeptide: Probable protein phosphatase 2C 20 (290 aa).

Residues Ala31 to Phe278 form the PPM-type phosphatase domain. The Mn(2+) site is built by Asp68, Gly69, Asp230, and Asp269.

This sequence belongs to the PP2C family. Requires Mg(2+) as cofactor. Mn(2+) is required as a cofactor.

It carries out the reaction O-phospho-L-seryl-[protein] + H2O = L-seryl-[protein] + phosphate. The enzyme catalyses O-phospho-L-threonyl-[protein] + H2O = L-threonyl-[protein] + phosphate. May be involved in defense signaling. This is Probable protein phosphatase 2C 20 (PPC3-1.2) from Arabidopsis thaliana (Mouse-ear cress).